The primary structure comprises 160 residues: Large ribosomal subunit protein uL15 (160 aa).

Polar residues predominate over residues 1–14 (MKLNDISDNPGSSK). The disordered stretch occupies residues 1–35 (MKLNDISDNPGSSKSRMRVGRGIGSGKGKTCGRGV). Positions 21–35 (RGIGSGKGKTCGRGV) are enriched in gly residues.

This sequence belongs to the universal ribosomal protein uL15 family. Part of the 50S ribosomal subunit.

In terms of biological role, binds to the 23S rRNA. This is Large ribosomal subunit protein uL15 from Beijerinckia indica subsp. indica (strain ATCC 9039 / DSM 1715 / NCIMB 8712).